The chain runs to 307 residues: Aspartate carbamoyltransferase catalytic subunit (307 aa).

Carbamoyl phosphate contacts are provided by Arg-55 and Thr-56. Lys-85 lines the L-aspartate pocket. Positions 106, 134, and 137 each coordinate carbamoyl phosphate. L-aspartate contacts are provided by Arg-167 and Arg-228. 2 residues coordinate carbamoyl phosphate: Leu-266 and Pro-267.

This sequence belongs to the aspartate/ornithine carbamoyltransferase superfamily. ATCase family. In terms of assembly, heterododecamer (2C3:3R2) of six catalytic PyrB chains organized as two trimers (C3), and six regulatory PyrI chains organized as three dimers (R2).

It carries out the reaction carbamoyl phosphate + L-aspartate = N-carbamoyl-L-aspartate + phosphate + H(+). Its pathway is pyrimidine metabolism; UMP biosynthesis via de novo pathway; (S)-dihydroorotate from bicarbonate: step 2/3. Functionally, catalyzes the condensation of carbamoyl phosphate and aspartate to form carbamoyl aspartate and inorganic phosphate, the committed step in the de novo pyrimidine nucleotide biosynthesis pathway. This chain is Aspartate carbamoyltransferase catalytic subunit, found in Tolumonas auensis (strain DSM 9187 / NBRC 110442 / TA 4).